Reading from the N-terminus, the 292-residue chain is Probable endonuclease 4 (292 aa).

Positions 70, 111, 146, 180, 183, 215, 228, 230, and 260 each coordinate Zn(2+).

The protein belongs to the AP endonuclease 2 family. It depends on Zn(2+) as a cofactor.

The catalysed reaction is Endonucleolytic cleavage to 5'-phosphooligonucleotide end-products.. Endonuclease IV plays a role in DNA repair. It cleaves phosphodiester bonds at apurinic or apyrimidinic (AP) sites, generating a 3'-hydroxyl group and a 5'-terminal sugar phosphate. This Shouchella clausii (strain KSM-K16) (Alkalihalobacillus clausii) protein is Probable endonuclease 4.